The chain runs to 473 residues: Photosystem II CP43 reaction center protein (473 aa).

Positions 1–14 are excised as a propeptide; sequence MKTLYSLRRFYHVE. Position 15 is an N-acetylthreonine (Thr15). Thr15 is modified (phosphothreonine). A run of 5 helical transmembrane segments spans residues 69–93, 134–155, 178–200, 255–275, and 291–312; these read LFEVAHFVPEKPMYEQGLILLPHLA, LLGPETLEESFPFFGYVWKDRN, KALYFGGVYDTWAPGGGDVRKIT, KPFAWARRALVWSGEAYLSYS, and WFNNTAYPSEFYGPTGPEASQA. Glu367 contacts [CaMn4O5] cluster. Residues 447 to 471 form a helical membrane-spanning segment; sequence RARAAAAGFEKGIDRDFEPVLFMTP.

Belongs to the PsbB/PsbC family. PsbC subfamily. As to quaternary structure, PSII is composed of 1 copy each of membrane proteins PsbA, PsbB, PsbC, PsbD, PsbE, PsbF, PsbH, PsbI, PsbJ, PsbK, PsbL, PsbM, PsbT, PsbX, PsbY, PsbZ, Psb30/Ycf12, at least 3 peripheral proteins of the oxygen-evolving complex and a large number of cofactors. It forms dimeric complexes. It depends on Binds multiple chlorophylls and provides some of the ligands for the Ca-4Mn-5O cluster of the oxygen-evolving complex. It may also provide a ligand for a Cl- that is required for oxygen evolution. PSII binds additional chlorophylls, carotenoids and specific lipids. as a cofactor.

The protein localises to the plastid. It is found in the chloroplast thylakoid membrane. In terms of biological role, one of the components of the core complex of photosystem II (PSII). It binds chlorophyll and helps catalyze the primary light-induced photochemical processes of PSII. PSII is a light-driven water:plastoquinone oxidoreductase, using light energy to abstract electrons from H(2)O, generating O(2) and a proton gradient subsequently used for ATP formation. The polypeptide is Photosystem II CP43 reaction center protein (Solanum tuberosum (Potato)).